A 118-amino-acid polypeptide reads, in one-letter code: Small ribosomal subunit protein uS13 (118 aa).

The interval 94 to 118 is disordered; sequence SLPLRGQRTKTNARTRKGPRKPIKK.

Belongs to the universal ribosomal protein uS13 family. In terms of assembly, part of the 30S ribosomal subunit. Forms a loose heterodimer with protein S19. Forms two bridges to the 50S subunit in the 70S ribosome.

Functionally, located at the top of the head of the 30S subunit, it contacts several helices of the 16S rRNA. In the 70S ribosome it contacts the 23S rRNA (bridge B1a) and protein L5 of the 50S subunit (bridge B1b), connecting the 2 subunits; these bridges are implicated in subunit movement. Contacts the tRNAs in the A and P-sites. This is Small ribosomal subunit protein uS13 from Alteromonas mediterranea (strain DSM 17117 / CIP 110805 / LMG 28347 / Deep ecotype).